A 1102-amino-acid polypeptide reads, in one-letter code: Probable leucine-rich repeat receptor-like protein kinase At5g63930 (1102 aa).

An N-terminal signal peptide occupies residues 1 to 26 (MVKEMMKLAVFFISLLLILLISETTG). At 27–737 (LNLEGQYLLE…GKPGGMRSSK (711 aa)) the chain is on the extracellular side. N-linked (GlcNAc...) asparagine glycosylation is found at Asn54, Asn68, Asn79, and Asn119. 26 LRR repeats span residues 72 to 96 (DPEV…IGGL), 97 to 120 (VHLK…IGNC), 122 to 144 (SLEI…IGKL), 145 to 170 (VSLE…NLLS), 172 to 192 (SQLV…IGNL), 193 to 216 (KRLT…IGGC), 217 to 241 (ESLV…GMLK), 243 to 264 (LSQV…ISNC), 265 to 288 (TSLE…LGDL), 289 to 312 (QSLE…IGNL), 314 to 336 (YAIE…LGNI), 337 to 360 (EGLE…LSTL), 361 to 383 (KNLS…GFQY), 385 to 408 (RGLF…LGWY), 409 to 432 (SDLW…LCLH), 433 to 456 (SNMI…ITTC), 458 to 480 (TLVQ…LCKQ), 481 to 504 (VNVT…VGNC), 505 to 528 (SALQ…IGML), 529 to 552 (SQLG…IFNC), 554 to 576 (MLQR…VGSL), 577 to 602 (YQLE…NLSR), 604 to 624 (TELQ…LGSL), 625 to 649 (TGLQ…LSNL), 651 to 672 (MLEF…SFAN), and 674 to 700 (SSLL…SMSS). Asn180 is a glycosylation site (N-linked (GlcNAc...) asparagine). Asn263 is a glycosylation site (N-linked (GlcNAc...) asparagine). N-linked (GlcNAc...) asparagine glycans are attached at residues Asn302 and Asn311. An N-linked (GlcNAc...) asparagine glycan is attached at Asn362. Residue Asn444 is glycosylated (N-linked (GlcNAc...) asparagine). 2 N-linked (GlcNAc...) asparagine glycosylation sites follow: Asn482 and Asn503. Asn535, Asn564, Asn588, Asn599, Asn614, Asn632, Asn661, Asn672, Asn680, and Asn695 each carry an N-linked (GlcNAc...) asparagine glycan. The helical transmembrane segment at 738 to 758 (IIAITAAVIGGVSLMLIALIV) threads the bilayer. The Cytoplasmic segment spans residues 759–1102 (YLMRRPVRTV…TEELTQTTTP (344 aa)). A phosphothreonine mark is found at Thr793 and Thr801. In terms of domain architecture, Protein kinase spans 804 to 1091 (FDESFVVGRG…ERSEGEQEHL (288 aa)). Residues 810-818 (VGRGACGTV) and Lys832 each bind ATP. Tyr882 and Tyr919 each carry phosphotyrosine. The active-site Proton acceptor is the Asp932. At Ser966 the chain carries Phosphoserine. Phosphotyrosine is present on residues Tyr974 and Tyr981. Thr982 carries the phosphothreonine modification.

It belongs to the protein kinase superfamily. Ser/Thr protein kinase family.

It localises to the cell membrane. The catalysed reaction is L-seryl-[protein] + ATP = O-phospho-L-seryl-[protein] + ADP + H(+). It catalyses the reaction L-threonyl-[protein] + ATP = O-phospho-L-threonyl-[protein] + ADP + H(+). This chain is Probable leucine-rich repeat receptor-like protein kinase At5g63930, found in Arabidopsis thaliana (Mouse-ear cress).